Consider the following 514-residue polypeptide: Polygalacturonase (514 aa).

The N-terminal stretch at 1 to 22 is a signal peptide; it reads MAMKFIAPMAFVAMQLIIMAAA. Residues 23–45 constitute a propeptide that is removed on maturation; it reads EDQSAQIMLDSDIEQYLRSNRSL. PbH1 repeat units follow at residues 214-240, 241-262, 264-284, 294-315, and 323-344; these read CEGV…DIFA, SKNF…AIGT, SSNI…SIGS, VSYV…RIKT, and ASHI…LINQ. D255 acts as the Proton donor in catalysis. The active site involves H278. Residues 434–514 constitute a propeptide that is removed on maturation; that stretch reads AKRKESKSHK…CSRHGKIYHP (81 aa). N-linked (GlcNAc...) asparagine glycans are attached at residues N460 and N472.

This sequence belongs to the glycosyl hydrolase 28 family.

It localises to the secreted. It is found in the plastid. The protein localises to the amyloplast. Its subcellular location is the cell wall. The catalysed reaction is (1,4-alpha-D-galacturonosyl)n+m + H2O = (1,4-alpha-D-galacturonosyl)n + (1,4-alpha-D-galacturonosyl)m.. The polypeptide is Polygalacturonase (Cryptomeria japonica (Japanese cedar)).